We begin with the raw amino-acid sequence, 182 residues long: Dual-action ribosomal maturation protein DarP (182 aa).

Belongs to the DarP family.

Its subcellular location is the cytoplasm. Its function is as follows. Member of a network of 50S ribosomal subunit biogenesis factors which assembles along the 30S-50S interface, preventing incorrect 23S rRNA structures from forming. Promotes peptidyl transferase center (PTC) maturation. This Serratia proteamaculans (strain 568) protein is Dual-action ribosomal maturation protein DarP.